The sequence spans 629 residues: Ionotropic receptor 75a (629 aa).

Residues Met-1–Pro-335 lie on the Extracellular side of the membrane. N-linked (GlcNAc...) asparagine glycosylation is found at Asn-61, Asn-112, Asn-126, Asn-144, Asn-166, and Asn-232. Residues Leu-336–Phe-356 form a helical membrane-spanning segment. The Cytoplasmic portion of the chain corresponds to Tyr-357–Ser-374. Residues Leu-375–Pro-395 form a helical membrane-spanning segment. The Extracellular segment spans residues Arg-396–Leu-402. The helical transmembrane segment at Ile-403–Val-423 threads the bilayer. The Cytoplasmic portion of the chain corresponds to Ser-424–Tyr-592. Residues Val-593–Val-613 traverse the membrane as a helical segment. At Glu-614–Pro-629 the chain is on the extracellular side.

Belongs to the glutamate-gated ion channel (TC 1.A.10.1) family. In terms of tissue distribution, expressed in acetic-acid-sensing neurons in the antennal coeloconic 2 (ac2) and antennal coeloconic 3 (ac3) sensilla class of sensory hairs (at protein level).

It localises to the cell membrane. It is found in the cell projection. The protein localises to the dendrite. Functionally, odorant receptor for acetic and propionic acid. Functions as part of an olfactory receptor complex including the ionotropic receptor coreceptor Ir8a. This Drosophila melanogaster (Fruit fly) protein is Ionotropic receptor 75a.